The primary structure comprises 183 residues: Large ribosomal subunit protein uL5 (183 aa).

The protein belongs to the universal ribosomal protein uL5 family. As to quaternary structure, part of the 50S ribosomal subunit; part of the 5S rRNA/L5/L18/L25 subcomplex. Contacts the 5S rRNA and the P site tRNA. Forms a bridge to the 30S subunit in the 70S ribosome.

In terms of biological role, this is one of the proteins that bind and probably mediate the attachment of the 5S RNA into the large ribosomal subunit, where it forms part of the central protuberance. In the 70S ribosome it contacts protein S13 of the 30S subunit (bridge B1b), connecting the 2 subunits; this bridge is implicated in subunit movement. Contacts the P site tRNA; the 5S rRNA and some of its associated proteins might help stabilize positioning of ribosome-bound tRNAs. This Flavobacterium johnsoniae (strain ATCC 17061 / DSM 2064 / JCM 8514 / BCRC 14874 / CCUG 350202 / NBRC 14942 / NCIMB 11054 / UW101) (Cytophaga johnsonae) protein is Large ribosomal subunit protein uL5.